Here is a 147-residue protein sequence, read N- to C-terminus: Myoglobin (147 aa).

The 140-residue stretch at alanine 2–lysine 141 folds into the Globin domain. Histidine 60 is a nitrite binding site. Histidine 60 provides a ligand contact to O2. Histidine 89 contributes to the heme b binding site.

This sequence belongs to the globin family. Monomeric.

The protein resides in the cytoplasm. Its subcellular location is the sarcoplasm. It carries out the reaction Fe(III)-heme b-[protein] + nitric oxide + H2O = Fe(II)-heme b-[protein] + nitrite + 2 H(+). The catalysed reaction is H2O2 + AH2 = A + 2 H2O. In terms of biological role, monomeric heme protein which primary function is to store oxygen and facilitate its diffusion within muscle tissues. Reversibly binds oxygen through a pentacoordinated heme iron and enables its timely and efficient release as needed during periods of heightened demand. Depending on the oxidative conditions of tissues and cells, and in addition to its ability to bind oxygen, it also has a nitrite reductase activity whereby it regulates the production of bioactive nitric oxide. Under stress conditions, like hypoxia and anoxia, it also protects cells against reactive oxygen species thanks to its pseudoperoxidase activity. The chain is Myoglobin (mb) from Thunnus alalunga (Albacore).